The chain runs to 802 residues: MDSWFILVLLGSGLICVSANNATTVAPSVGITRLINSSTAEPVKEEAKTSNPTSSLTSLSVAPTFSPNITLGPTYLTTVNSSDSDNGTTRTASTNSIGITISPNGTWLPDNQFTDARTEPWEGNSSTAATTPETFPPSGNSDSKDRRDETPIIAVMVALSSLLVIVFIIIVLYMLRFKKYKQAGSHSNSFRLSNGRTEDVEPQSVPLLARSPSTNRKYPPLPVDKLEEEINRRMADDNKLFREEFNALPACPIQATCEAASKEENKEKNRYVNILPYDHSRVHLTPVEGVPDSDYINASFINGYQEKNKFIAAQGPKEETVNDFWRMIWEQNTATIVMVTNLKERKECKCAQYWPDQGCWTYGNIRVSVEDVTVLVDYTVRKFCIQQVGDMTNRKPQRLITQFHFTSWPDFGVPFTPIGMLKFLKKVKACNPQYAGAIVVHCSAGVGRTGTFVVIDAMLDMMHTERKVDVYGFVSRIRAQRCQMVQTDMQYVFIYQALLEHYLYGDTELEVTSLETHLQKIYNKIPGTSNNGLEEEFKKLTSIKIQNDKMRTGNLPANMKKNRVLQIIPYEFNRVIIPVKRGEENTDYVNASFIDGYRQKDSYIASQGPLLHTIEDFWRMIWEWKSCSIVMLTELEERGQEKCAQYWPSDGLVSYGDITVELKKEEECESYTVRDLLVTNTRENKSRQIRQFHFHGWPEVGIPSDGKGMISIIAAVQKQQQQSGNHPITVHCSAGAGRTGTFCALSTVLERVKAEGILDVFQTVKSLRLQRPHMVQTLEQYEFCYKVVQEYIDAFSDYANFK.

An N-terminal signal peptide occupies residues 1–19 (MDSWFILVLLGSGLICVSA). The Extracellular portion of the chain corresponds to 20–151 (NNATTVAPSV…DSKDRRDETP (132 aa)). N21 and N36 each carry an N-linked (GlcNAc...) asparagine glycan. The segment at 39–59 (TAEPVKEEAKTSNPTSSLTSL) is disordered. Residues N68, N80, N86, N104, and N124 are each glycosylated (N-linked (GlcNAc...) asparagine). Composition is skewed to polar residues over residues 79-115 (VNSS…QFTD) and 123-141 (GNSS…SGNS). The segment at 79–146 (VNSSDSDNGT…PSGNSDSKDR (68 aa)) is disordered. Residues 152-174 (IIAVMVALSSLLVIVFIIIVLYM) traverse the membrane as a helical segment. The Cytoplasmic portion of the chain corresponds to 175-802 (LRFKKYKQAG…DAFSDYANFK (628 aa)). Residues S211 and S213 each carry the phosphoserine modification. Tyrosine-protein phosphatase domains lie at 241 to 501 (FREE…LLEH) and 533 to 791 (LEEE…VQEY). Substrate is bound by residues D410, 442 to 448 (CSAGVGR), and Q486. The Phosphocysteine intermediate role is filled by C442. C732 serves as the catalytic Phosphocysteine intermediate. Residue Y798 is modified to Phosphotyrosine.

It belongs to the protein-tyrosine phosphatase family. Receptor class 4 subfamily. As to quaternary structure, part of a complex comprised of PTPRA, BCAR1, BCAR3 (via SH2 domain), and SRC. Within the complex, interacts (when phosphorylated on Tyr-798) with BCAR3 (via SH2 domain). Interacts with GRB2. Integrin binding to extracellular matrix induces phosphorylation at Tyr-798 which induces PTPRA localization and recruitment of BCAR3, BCAR1 and CRK to focal adhesions.

Its subcellular location is the cell membrane. The protein localises to the cell junction. It localises to the focal adhesion. The catalysed reaction is O-phospho-L-tyrosyl-[protein] + H2O = L-tyrosyl-[protein] + phosphate. Functionally, tyrosine protein phosphatase which is involved in integrin-mediated focal adhesion formation. Following integrin engagement, specifically recruits BCAR3, BCAR1 and CRK to focal adhesions thereby promoting SRC-mediated phosphorylation of BRAC1 and the subsequent activation of PAK and small GTPase RAC1 and CDC42. This is Receptor-type tyrosine-protein phosphatase alpha (PTPRA) from Homo sapiens (Human).